The chain runs to 383 residues: Homoserine O-succinyltransferase (383 aa).

The AB hydrolase-1 domain maps to 51–361 (NALLICHALS…ESDFGHDAFL (311 aa)). Catalysis depends on Ser157, which acts as the Nucleophile. Arg227 is a binding site for substrate. Residues Asp324 and His357 contribute to the active site. Position 358 (Asp358) interacts with substrate.

It belongs to the AB hydrolase superfamily. MetX family. In terms of assembly, homodimer.

The protein localises to the cytoplasm. The catalysed reaction is L-homoserine + succinyl-CoA = O-succinyl-L-homoserine + CoA. The protein operates within amino-acid biosynthesis; L-methionine biosynthesis via de novo pathway; O-succinyl-L-homoserine from L-homoserine: step 1/1. In terms of biological role, transfers a succinyl group from succinyl-CoA to L-homoserine, forming succinyl-L-homoserine. The chain is Homoserine O-succinyltransferase from Teredinibacter turnerae (strain ATCC 39867 / T7901).